Here is a 185-residue protein sequence, read N- to C-terminus: Peptidyl-tRNA hydrolase (185 aa).

Position 14 (Tyr14) interacts with tRNA. Catalysis depends on His19, which acts as the Proton acceptor. TRNA contacts are provided by Phe63, Asn65, and Asn111.

This sequence belongs to the PTH family. As to quaternary structure, monomer.

The protein resides in the cytoplasm. The catalysed reaction is an N-acyl-L-alpha-aminoacyl-tRNA + H2O = an N-acyl-L-amino acid + a tRNA + H(+). In terms of biological role, hydrolyzes ribosome-free peptidyl-tRNAs (with 1 or more amino acids incorporated), which drop off the ribosome during protein synthesis, or as a result of ribosome stalling. Its function is as follows. Catalyzes the release of premature peptidyl moieties from peptidyl-tRNA molecules trapped in stalled 50S ribosomal subunits, and thus maintains levels of free tRNAs and 50S ribosomes. In Desulfitobacterium hafniense (strain Y51), this protein is Peptidyl-tRNA hydrolase.